Consider the following 253-residue polypeptide: 1-(5-phosphoribosyl)-5-[(5-phosphoribosylamino)methylideneamino] imidazole-4-carboxamide isomerase (253 aa).

The active-site Proton acceptor is Asp-8. Residue Asp-129 is the Proton donor of the active site.

The protein belongs to the HisA/HisF family.

It is found in the cytoplasm. The enzyme catalyses 1-(5-phospho-beta-D-ribosyl)-5-[(5-phospho-beta-D-ribosylamino)methylideneamino]imidazole-4-carboxamide = 5-[(5-phospho-1-deoxy-D-ribulos-1-ylimino)methylamino]-1-(5-phospho-beta-D-ribosyl)imidazole-4-carboxamide. The protein operates within amino-acid biosynthesis; L-histidine biosynthesis; L-histidine from 5-phospho-alpha-D-ribose 1-diphosphate: step 4/9. The polypeptide is 1-(5-phosphoribosyl)-5-[(5-phosphoribosylamino)methylideneamino] imidazole-4-carboxamide isomerase (Microcystis aeruginosa (strain NIES-843 / IAM M-2473)).